The sequence spans 413 residues: Histidine--tRNA ligase (413 aa).

This sequence belongs to the class-II aminoacyl-tRNA synthetase family. Homodimer.

It is found in the cytoplasm. The catalysed reaction is tRNA(His) + L-histidine + ATP = L-histidyl-tRNA(His) + AMP + diphosphate + H(+). The polypeptide is Histidine--tRNA ligase (Geobacter metallireducens (strain ATCC 53774 / DSM 7210 / GS-15)).